The following is a 674-amino-acid chain: Polyunsaturated fatty acid 5-lipoxygenase (674 aa).

The PLAT domain maps to P2–K118. G17, T18, D19, N44, D45, E47, D79, and D80 together coordinate Ca(2+). Residues L119–I674 enclose the Lipoxygenase domain. S272 carries the phosphoserine; by MAPKAPK2 modification. Residues H368 and H373 each coordinate Fe cation. S524 is subject to Phosphoserine; by PKA. The Fe cation site is built by H551, N555, and I674.

The protein belongs to the lipoxygenase family. Homodimer. Interacts with ALOX5AP and LTC4S. Interacts with COTL1, the interaction is required for stability and efficient catalytic activity. Interacts with PIK3R1; this interaction bridges ALOX5 with CD40 after CD40 ligation in B cells and leads to the production of reactive oxygen species (ROS). Interacts (via PLAT domain) with DICER1 (via Dicer dsRNA-binding fold domain); this interaction enhances arachidonate 5-lipoxygenase activity and modifies the miRNA precursor processing activity of DICER1. Fe cation serves as cofactor. In terms of processing, serine phosphorylation by MAPKAPK2 is stimulated by arachidonic acid. Phosphorylation on Ser-524 by PKA has an inhibitory effect. Phosphorylation on Ser-272 prevents export from the nucleus. Phosphorylation at Ser-524 is stimulated by 8-bromo-3',5'-cyclic AMP or prostaglandin E2.

It is found in the cytoplasm. Its subcellular location is the nucleus matrix. It localises to the nucleus membrane. The protein localises to the perinuclear region. The protein resides in the cytosol. It is found in the nucleus envelope. Its subcellular location is the nucleus intermembrane space. The enzyme catalyses (5Z,8Z,11Z,14Z)-eicosatetraenoate + O2 = leukotriene A4 + H2O. The catalysed reaction is 18-HEPE + O2 = (5S)-hydroperoxy-18-hydroxy-(7E,9E,11Z,14Z,16E)-eicosapentaenoate. It carries out the reaction (18R)-hydroxy-(5Z,8Z,11Z,14Z,16E)-eicosapentaenoate + O2 = (5S)-hydroperoxy-(18R)-hydroxy-(6E,8Z,11Z,14Z,16E)-eicosapentaenoate. It catalyses the reaction (18S)-hydroxy-(5Z,8Z,11Z,14Z,16E)-eicosapentaenoate + O2 = (5S)-hydroperoxy-(18S)-hydroxy-(6E,8Z,11Z,14Z,16E)-eicosapentaenoate. The enzyme catalyses (5S)-hydroperoxy-(18S)-hydroxy-(6E,8Z,11Z,14Z,16E)-eicosapentaenoate = (5S,6S)-epoxy-(18S)-hydroxy-(7E,9E,11Z,14Z,16E)-eicosapentaenoate + H2O. The catalysed reaction is (5S)-hydroperoxy-(18R)-hydroxy-(6E,8Z,11Z,14Z,16E)-eicosapentaenoate = (5S,6S)-epoxy-(18R)-hydroxy-(7E,9E,11Z,14Z,16E)-eicosapentaenoate + H2O. It carries out the reaction (5S)-hydroperoxy-18-hydroxy-(7E,9E,11Z,14Z,16E)-eicosapentaenoate = (5S,6S)-epoxy-18-hydroxy-(7E,9E,11Z,14Z,16E)-eicosapentaenoate + H2O. It catalyses the reaction (5Z,8Z,11Z,14Z)-eicosatetraenoate + O2 = (5S)-hydroperoxy-(6E,8Z,11Z,14Z)-eicosatetraenoate. The enzyme catalyses (15S)-hydroxy-(5Z,8Z,11Z,13E)-eicosatetraenoate + O2 = (5S)-hydroperoxy-(15S)-hydroxy-(6E,8Z,11Z,13E)-eicosatetraenoate. The catalysed reaction is (5S)-hydroperoxy-(6E,8Z,11Z,14Z)-eicosatetraenoate = leukotriene A4 + H2O. It carries out the reaction (5Z,8Z,11Z,14Z)-eicosatetraenoate + O2 = (8S)-hydroperoxy-(5Z,9E,11Z,14Z)-eicosatetraenoate. It catalyses the reaction (5Z,8Z,11Z,14Z)-eicosatetraenoate + O2 = (12S)-hydroperoxy-(5Z,8Z,10E,14Z)-eicosatetraenoate. The enzyme catalyses (5Z,8Z)-eicosadienoate + O2 = (5S)-hydroperoxy-(6E,8Z)-eicosadienoate. The catalysed reaction is (12S)-hydroxy-(5Z,8Z,10E,14Z)-eicosatetraenoate + O2 = (5S)-hydroperoxy-(12S)-hydroxy-(6E,8Z,10E,14Z)-eicosatetraenoate. It carries out the reaction (5Z,8Z,11Z,14Z,17Z)-eicosapentaenoate + O2 = 5-hydroperoxy-(6E,8Z,11Z,14Z,17Z)-eicosapentaenoate. It catalyses the reaction (4Z,7Z,10Z,13Z,16Z,19Z)-docosahexaenoate + O2 = (14S)-hydroperoxy-(4Z,7Z,10Z,12E,16Z,19Z)-docosahexaenoate. The enzyme catalyses (4Z,7Z,10Z,13Z,16Z,19Z)-docosahexaenoate + O2 = (7S)-hydroperoxy-(4Z,8E,10Z,13Z,16Z,19Z)-docosahexaenoate. The catalysed reaction is (4Z,7Z,10Z,13Z,16Z,19Z)-docosahexaenoate + O2 = (17S)-hydroperoxy-(4Z,7Z,10Z,13Z,15E,19Z)-docosahexaenoate. The protein operates within lipid metabolism; leukotriene A4 biosynthesis. Its activity is regulated as follows. Undergoes a sequential loss of the oxygenase and pseudoperoxidase activities which is dependent on the structural characteristics of the substrate for the reaction, on oxygen concentration and on exposure to phospholipids and calcium. 15-HETE and other 15-mono-hydroxyeicosanoids exhibit the highest inhibitory potencies in their capability of suppressing 5-lipoxygenation of arachidonic acid, whereas the other HETEs, (5S,15S)-dihydroxy-(6E,8Z,11Z,13E)-eicosatetraenoic acid (5,15-diHETE) as well as octadecanoids, are modest or poor inhibitors. The formation of (5S)-hydroperoxy-(15S)-hydroxy-(6E,8Z,11Z,13E)-eicosatetraenoate is strongly stimulated by either hydroperoxypolyenoic fatty acids or arachidonic acid. Arachidonate 5-lipoxygenase and leukotriene A4 synthase activities are allosterically increased by ATP. In terms of biological role, catalyzes the oxygenation of arachidonate ((5Z,8Z,11Z,14Z)-eicosatetraenoate) to 5-hydroperoxyeicosatetraenoate (5-HPETE) followed by the dehydration to 5,6- epoxyeicosatetraenoate (Leukotriene A4/LTA4), the first two steps in the biosynthesis of leukotrienes, which are potent mediators of inflammation. Also catalyzes the oxygenation of arachidonate into 8-hydroperoxyicosatetraenoate (8-HPETE) and 12-hydroperoxyicosatetraenoate (12-HPETE). Displays lipoxin synthase activity being able to convert (15S)-HETE into a conjugate tetraene. Although arachidonate is the preferred substrate, this enzyme can also metabolize oxidized fatty acids derived from arachidonate such as (15S)-HETE, eicosapentaenoate (EPA) such as (18R)- and (18S)-HEPE or docosahexaenoate (DHA) which lead to the formation of specialized pro-resolving mediators (SPM) lipoxin and resolvins E and D respectively, therefore it participates in anti-inflammatory responses. Oxidation of DHA directly inhibits endothelial cell proliferation and sprouting angiogenesis via peroxisome proliferator-activated receptor gamma (PPARgamma). It does not catalyze the oxygenation of linoleic acid and does not convert (5S)-HETE to lipoxin isomers. In addition to inflammatory processes, it participates in dendritic cell migration, wound healing through an antioxidant mechanism based on heme oxygenase-1 (HO-1) regulation expression, monocyte adhesion to the endothelium via ITGAM expression on monocytes. Moreover, it helps establish an adaptive humoral immunity by regulating primary resting B cells and follicular helper T cells and participates in the CD40-induced production of reactive oxygen species (ROS) after CD40 ligation in B cells through interaction with PIK3R1 that bridges ALOX5 with CD40. May also play a role in glucose homeostasis, regulation of insulin secretion and palmitic acid-induced insulin resistance via AMPK. Can regulate bone mineralization and fat cell differentiation increases in induced pluripotent stem cells. This Homo sapiens (Human) protein is Polyunsaturated fatty acid 5-lipoxygenase.